A 142-amino-acid chain; its full sequence is Transcriptional regulator MraZ (142 aa).

2 consecutive SpoVT-AbrB domains span residues 5–48 (EFEY…PLCE) and 77–120 (AFDV…DKET).

Belongs to the MraZ family. As to quaternary structure, forms oligomers.

The protein localises to the cytoplasm. It localises to the nucleoid. This Dehalococcoides mccartyi (strain ATCC BAA-2100 / JCM 16839 / KCTC 5957 / BAV1) protein is Transcriptional regulator MraZ.